The following is a 64-amino-acid chain: Defensin-like protein 41 (64 aa).

The segment at 1–21 is disordered; the sequence is MTQGKRKHPCDLKNPSKRAPP. Disulfide bonds link cysteine 10/cysteine 61, cysteine 24/cysteine 47, cysteine 33/cysteine 56, and cysteine 37/cysteine 58.

This sequence belongs to the DEFL family.

The polypeptide is Defensin-like protein 41 (Arabidopsis thaliana (Mouse-ear cress)).